The following is a 451-amino-acid chain: Glutamyl-tRNA(Gln) amidotransferase subunit D (451 aa).

Residues 78–97 (PREAPTPGEEEGSQEDFGQP) form a disordered region. An Asparaginase/glutaminase domain is found at 99-432 (PRVFFVGTGG…EEIQRLFTAN (334 aa)). Active-site residues include Thr-109, Thr-187, Asp-188, and Lys-266.

It belongs to the asparaginase 1 family. GatD subfamily. In terms of assembly, heterodimer of GatD and GatE.

The enzyme catalyses L-glutamyl-tRNA(Gln) + L-glutamine + ATP + H2O = L-glutaminyl-tRNA(Gln) + L-glutamate + ADP + phosphate + H(+). Its function is as follows. Allows the formation of correctly charged Gln-tRNA(Gln) through the transamidation of misacylated Glu-tRNA(Gln) in organisms which lack glutaminyl-tRNA synthetase. The reaction takes place in the presence of glutamine and ATP through an activated gamma-phospho-Glu-tRNA(Gln). The GatDE system is specific for glutamate and does not act on aspartate. This chain is Glutamyl-tRNA(Gln) amidotransferase subunit D, found in Thermofilum pendens (strain DSM 2475 / Hrk 5).